Reading from the N-terminus, the 198-residue chain is MKQFIDFIPLLLFFIVYKLDPRTVDVAGHELTVGGIYSATAMLIISSLVVYGALFIKQRKLEKSQWLTLIACLVFGSLTLAFHSETFLKWKAPVVNWLFALAFIGSHFIGDRLLIKRIMGHALTLPDPVWTRLNIAWIAFFLFCGAANLFVAFTFQSIWVDFKVFGSLGMTVLFLVGQGIYLSRHLHDADTTTPKTED.

5 helical membrane-spanning segments follow: residues 36–56 (IYSA…ALFI), 67–87 (LTLI…SETF), 90–110 (WKAP…HFIG), 135–155 (IAWI…AFTF), and 162–182 (FKVF…GIYL).

It belongs to the YciB family.

It is found in the cell inner membrane. In terms of biological role, plays a role in cell envelope biogenesis, maintenance of cell envelope integrity and membrane homeostasis. This chain is Inner membrane-spanning protein YciB, found in Pseudomonas fluorescens (strain Pf0-1).